The following is a 292-amino-acid chain: RWD domain-containing protein 2A (292 aa).

The RWD domain maps to 14–134; that stretch reads LEMEMLFSMF…QWLQDNSASY (121 aa).

The sequence is that of RWD domain-containing protein 2A (RWDD2A) from Homo sapiens (Human).